Here is a 480-residue protein sequence, read N- to C-terminus: MNFETVIGLEVHVELNTNSKIFSPTSAHFGNEQNTNTNVIDWSFPGVLPVLNKGVVDAGIKAALALNMDIHQHMHFDRKNYFYPDNPKAYQISQFDEPIGYNGWIEVQLEDGTTKKIGIERAHLEEDAGKNTHGTDGFSYVDLNRQGVPLIEIVSEADMRSPEEAYAYLTALKEVIQYTGISDVKMEEGSMRVDANISLRPYGQEEFGTKTELKNLNSFSNVRKGLEYEVQRQAKILRSGGVIRQETRRYDEASKSTILMRVKEGAADYRYFPEPDLPLFEISDEWIEEMRTELPEFPKDRRARYVAELGLSDYDANQLTATKVTSDFFEAAVALGGDAKQVSNWLQGEVAQFLNAEGKTLEEIQLTPENLVEMIAIIEDGTISSKIAKKVFVHLAKNGGGAREYVEKAGLVQISDPEVLIPIIHQVFADNEAAIADFKSGKRNADKAFTGFLMKATKGQANPQVALKLLAQELAKLKED.

It belongs to the GatB/GatE family. GatB subfamily. As to quaternary structure, heterotrimer of A, B and C subunits.

It carries out the reaction L-glutamyl-tRNA(Gln) + L-glutamine + ATP + H2O = L-glutaminyl-tRNA(Gln) + L-glutamate + ADP + phosphate + H(+). It catalyses the reaction L-aspartyl-tRNA(Asn) + L-glutamine + ATP + H2O = L-asparaginyl-tRNA(Asn) + L-glutamate + ADP + phosphate + 2 H(+). In terms of biological role, allows the formation of correctly charged Asn-tRNA(Asn) or Gln-tRNA(Gln) through the transamidation of misacylated Asp-tRNA(Asn) or Glu-tRNA(Gln) in organisms which lack either or both of asparaginyl-tRNA or glutaminyl-tRNA synthetases. The reaction takes place in the presence of glutamine and ATP through an activated phospho-Asp-tRNA(Asn) or phospho-Glu-tRNA(Gln). The chain is Aspartyl/glutamyl-tRNA(Asn/Gln) amidotransferase subunit B from Streptococcus thermophilus (strain ATCC BAA-491 / LMD-9).